A 312-amino-acid polypeptide reads, in one-letter code: Olfactory receptor 6C75 (312 aa).

Topologically, residues 1–23 are extracellular; the sequence is MRNSTAVTDFILLGLTSDPQWQV. Residue asparagine 3 is glycosylated (N-linked (GlcNAc...) asparagine). The chain crosses the membrane as a helical span at residues 24–44; the sequence is VLFIFLLVTYMLSVTGNLIII. At 45–63 the chain is on the cytoplasmic side; the sequence is TLTLSDPHLQTPMYFFLRN. A helical transmembrane segment spans residues 64–84; the sequence is FSFLEISFTSVCIPRFLVTVV. Residues 85–95 are Extracellular-facing; the sequence is TGNRTISYNGC. The cysteines at positions 95 and 177 are disulfide-linked. Residues 96–116 form a helical membrane-spanning segment; it reads VAQLFFFIFLGVTEFYLLAAM. Over 117-140 the chain is Cytoplasmic; the sequence is SYDRCMAICKPLHYTIIMSTRVCT. A helical transmembrane segment spans residues 141 to 161; it reads LLVFSSWLAGFLIIFPPVMLL. The Extracellular portion of the chain corresponds to 162–194; that stretch reads LQLDFCASNVIDHFICDSSPMLQLSCTNTHFLE. The chain crosses the membrane as a helical span at residues 195–215; sequence LMAFFLAVVTLMVTLTLVILS. Residues 216-237 lie on the Cytoplasmic side of the membrane; sequence YTNIIRTILKIPSMSQRKKAFS. The chain crosses the membrane as a helical span at residues 238 to 258; that stretch reads TCSSHMIVVSISYSSCIFMYI. Residues 259–269 lie on the Extracellular side of the membrane; that stretch reads KTSARERVTLS. A helical transmembrane segment spans residues 270 to 290; sequence KGVAVLNTSVAPLLNPFIYTL. The Cytoplasmic portion of the chain corresponds to 291–312; it reads RNKQVKQAFKSMVQKMIFSLNK.

Belongs to the G-protein coupled receptor 1 family.

The protein resides in the cell membrane. Odorant receptor. The sequence is that of Olfactory receptor 6C75 (OR6C75) from Homo sapiens (Human).